A 202-amino-acid polypeptide reads, in one-letter code: uncharacterized protein (202 aa).

Residues 14 to 74 (NAKTERILDV…AMADRYFQRC (61 aa)) enclose the HTH tetR-type domain.

This is an uncharacterized protein from Xanthobacter autotrophicus.